Consider the following 243-residue polypeptide: Ribonuclease PH (243 aa).

Residues Arg91 and 129–131 (GTR) each bind phosphate.

Belongs to the RNase PH family. In terms of assembly, homohexameric ring arranged as a trimer of dimers.

It catalyses the reaction tRNA(n+1) + phosphate = tRNA(n) + a ribonucleoside 5'-diphosphate. Functionally, phosphorolytic 3'-5' exoribonuclease that plays an important role in tRNA 3'-end maturation. Removes nucleotide residues following the 3'-CCA terminus of tRNAs; can also add nucleotides to the ends of RNA molecules by using nucleoside diphosphates as substrates, but this may not be physiologically important. Probably plays a role in initiation of 16S rRNA degradation (leading to ribosome degradation) during starvation. In Burkholderia pseudomallei (strain 668), this protein is Ribonuclease PH.